A 260-amino-acid chain; its full sequence is Flap endonuclease Xni (260 aa).

Position 105 (aspartate 105) interacts with Mg(2+). One can recognise a 5'-3' exonuclease domain in the interval 164 to 254; the sequence is SQFLDLLALA…LKDFRVNGPA (91 aa). K(+) contacts are provided by leucine 172, alanine 173, proline 181, isoleucine 183, and isoleucine 186. Residues 185–190 are interaction with DNA; that stretch reads GIGPKS.

Belongs to the Xni family. Mg(2+) serves as cofactor. The cofactor is K(+).

Has flap endonuclease activity. During DNA replication, flap endonucleases cleave the 5'-overhanging flap structure that is generated by displacement synthesis when DNA polymerase encounters the 5'-end of a downstream Okazaki fragment. This is Flap endonuclease Xni from Shewanella sp. (strain ANA-3).